A 260-amino-acid chain; its full sequence is Cytochrome c oxidase subunit 3 (260 aa).

Residues 1–15 lie on the Mitochondrial matrix side of the membrane; the sequence is MAHQAHAYHMVDPSP. The chain crosses the membrane as a helical span at residues 16-34; the sequence is WPLTGAVAALLLTSGLAMW. The Mitochondrial intermembrane portion of the chain corresponds to 35 to 40; it reads FHFGSM. The helical transmembrane segment at 41–66 threads the bilayer; the sequence is ILLTLGLITMVLTMIQWWRDVIREGT. Residues 67–72 lie on the Mitochondrial matrix side of the membrane; the sequence is FQGHHT. A helical membrane pass occupies residues 73–105; it reads PPVQKGLRYGMILFITSEVFFFIGFFWAFYNSS. Residues 106–128 are Mitochondrial intermembrane-facing; that stretch reads LAPTYELGECWPPTGITPLNPFE. Residues 129–152 traverse the membrane as a helical segment; it reads VPLLNTAVLLASGVTVTWAHHSIM. At 153 to 155 the chain is on the mitochondrial matrix side; that stretch reads HGD. Residues 156–183 form a helical membrane-spanning segment; sequence RKEAIQSLTLTILLGLYFTALQAMEYYE. Over 184 to 190 the chain is Mitochondrial intermembrane; it reads APFTIAD. A helical membrane pass occupies residues 191-223; sequence GVYGSTFFVATGFHGLHVIIGSLFLSVCLLRQI. The Mitochondrial matrix portion of the chain corresponds to 224 to 232; that stretch reads QYHFTSKHH. A helical membrane pass occupies residues 233–255; the sequence is FGFEAAWYWHFVDVVWLFLYVSI. Topologically, residues 256-260 are mitochondrial intermembrane; it reads YWWGS.

This sequence belongs to the cytochrome c oxidase subunit 3 family. As to quaternary structure, component of the cytochrome c oxidase (complex IV, CIV), a multisubunit enzyme composed of 14 subunits. The complex is composed of a catalytic core of 3 subunits MT-CO1, MT-CO2 and MT-CO3, encoded in the mitochondrial DNA, and 11 supernumerary subunits COX4I, COX5A, COX5B, COX6A, COX6B, COX6C, COX7A, COX7B, COX7C, COX8 and NDUFA4, which are encoded in the nuclear genome. The complex exists as a monomer or a dimer and forms supercomplexes (SCs) in the inner mitochondrial membrane with NADH-ubiquinone oxidoreductase (complex I, CI) and ubiquinol-cytochrome c oxidoreductase (cytochrome b-c1 complex, complex III, CIII), resulting in different assemblies (supercomplex SCI(1)III(2)IV(1) and megacomplex MCI(2)III(2)IV(2)).

It localises to the mitochondrion inner membrane. The catalysed reaction is 4 Fe(II)-[cytochrome c] + O2 + 8 H(+)(in) = 4 Fe(III)-[cytochrome c] + 2 H2O + 4 H(+)(out). Component of the cytochrome c oxidase, the last enzyme in the mitochondrial electron transport chain which drives oxidative phosphorylation. The respiratory chain contains 3 multisubunit complexes succinate dehydrogenase (complex II, CII), ubiquinol-cytochrome c oxidoreductase (cytochrome b-c1 complex, complex III, CIII) and cytochrome c oxidase (complex IV, CIV), that cooperate to transfer electrons derived from NADH and succinate to molecular oxygen, creating an electrochemical gradient over the inner membrane that drives transmembrane transport and the ATP synthase. Cytochrome c oxidase is the component of the respiratory chain that catalyzes the reduction of oxygen to water. Electrons originating from reduced cytochrome c in the intermembrane space (IMS) are transferred via the dinuclear copper A center (CU(A)) of subunit 2 and heme A of subunit 1 to the active site in subunit 1, a binuclear center (BNC) formed by heme A3 and copper B (CU(B)). The BNC reduces molecular oxygen to 2 water molecules using 4 electrons from cytochrome c in the IMS and 4 protons from the mitochondrial matrix. The sequence is that of Cytochrome c oxidase subunit 3 (mt-co3) from Xenopus laevis (African clawed frog).